A 139-amino-acid polypeptide reads, in one-letter code: MIDFDNRTSLNLHIEVIEQIASSLTNKEIELIVTDKDEMREINSAHRNIDKATDVLSFPYIEMPLSPLGSIVICSLHVEEKSKEFGHTLNDEFALLFIHGLLHLLGYDHEVDSGEMREEEARIIKEFNLPQSLIVRSEG.

Zn(2+) is bound by residues histidine 99, histidine 103, and histidine 109.

Belongs to the endoribonuclease YbeY family. The cofactor is Zn(2+).

Its subcellular location is the cytoplasm. Single strand-specific metallo-endoribonuclease involved in late-stage 70S ribosome quality control and in maturation of the 3' terminus of the 16S rRNA. This Sulfurimonas denitrificans (strain ATCC 33889 / DSM 1251) (Thiomicrospira denitrificans (strain ATCC 33889 / DSM 1251)) protein is Endoribonuclease YbeY.